The chain runs to 399 residues: Bombesin receptor subtype-3 (399 aa).

The Extracellular portion of the chain corresponds to 1 to 41 (MSQKQPQSPNQTLISITNDTESSSSVVSNDTTNKGWTGDNS). Asparagine 10 and asparagine 18 each carry an N-linked (GlcNAc...) asparagine glycan. A helical membrane pass occupies residues 42–63 (PGIEALCAIYITYAVIISVGIL). Residues 64–82 (GNAILIKVFFKTKSMQTVP) lie on the Cytoplasmic side of the membrane. The chain crosses the membrane as a helical span at residues 83 to 103 (NIFITSLALGDLLLLLTCVPV). At 104–121 (DATHYLAEGWLFGRIGCK) the chain is on the extracellular side. Cysteine 120 and cysteine 203 are disulfide-bonded. Residues 122–143 (VLSFIRLTSVGVSVFTLTILSA) traverse the membrane as a helical segment. At 144-163 (DRYKAVVKPLERQPSNAILK) the chain is on the cytoplasmic side. A helical transmembrane segment spans residues 164 to 184 (TCAKAGCIWIMSMIFALPEAI). At 185–220 (FSNVHTLRDPNKNMTSEWCAFYPVSEKLLQEIHALL) the chain is on the extracellular side. A helical transmembrane segment spans residues 221-241 (SFLVFYIIPLSIISVYYSLIA). The Cytoplasmic portion of the chain corresponds to 242 to 272 (RTLYKSTLNIPTEEQSHARKQVESRKRIAKT). Residues 273–293 (VLVLVALFALCWLPNHLLNLY) traverse the membrane as a helical segment. The Extracellular segment spans residues 294–313 (HSFTHKAYEDSSAIHFIVTI). Residues 314-333 (FSRVLAFSNSCVNPFALYWL) form a helical membrane-spanning segment. At 334–399 (SKTFQKQFKA…RPMKKEENRV (66 aa)) the chain is on the cytoplasmic side. Cysteine 347 carries the S-palmitoyl cysteine lipid modification.

It belongs to the G-protein coupled receptor 1 family. As to quaternary structure, interacts with C6orf89. In terms of tissue distribution, mainly in uteri of pregnant animals.

Its subcellular location is the cell membrane. In terms of biological role, role in sperm cell division, maturation, or function. The relative order of ligand affinity is GRP = neuromedin-C &gt;&gt; neuromedin-B. This receptor mediates its action by association with G proteins that activate a phosphatidylinositol-calcium second messenger system. The polypeptide is Bombesin receptor subtype-3 (BRS3) (Cavia porcellus (Guinea pig)).